The sequence spans 291 residues: E3 ubiquitin-protein ligase RZFP34 (291 aa).

The CHY-type zinc finger occupies 20 to 96 (IGSGHYGCSH…VQQNCSNCGV (77 aa)). Cys-27, His-29, Cys-40, Cys-41, Cys-47, Cys-50, His-51, His-66, Cys-78, Cys-81, Cys-91, Cys-94, Cys-103, Cys-106, His-119, Cys-120, Cys-123, Cys-126, His-136, Cys-137, Cys-140, Cys-143, His-152, and Cys-154 together coordinate Zn(2+). The segment at 98–162 (MGKYFCSKCK…QCVEGAMHHN (65 aa)) adopts a CTCHY-type zinc-finger fold. The segment at 163 to 206 (CPVCFEYLFDSTRDITVLRCGHTMHLECTKDMGLHNRYTCPVCS) adopts an RING-type; atypical zinc-finger fold. Ser-173 is modified (phosphoserine). Phosphothreonine is present on Thr-178. Ser-208 bears the Phosphoserine mark. A disordered region spans residues 271 to 291 (QRGSDSHSCSSGMPQVVGSTG).

As to quaternary structure, interacts with SRK2D/2SNRK2.2, SRK2I/SNRK2.3 and SRK2E/SNRK2.6. Post-translationally, phosphorylated at Ser-173, Thr-178 and Ser-208 by SRK2E/SNRK2.6 in response to abscisic acid (ABA). Phosphorylation activates its E3 ubiquitin-protein ligase activity. As to expression, expressed in roots, leaves, and anthers and stigma of open flowers.

The protein localises to the nucleus. It localises to the cytoplasm. It is found in the endoplasmic reticulum. It carries out the reaction S-ubiquitinyl-[E2 ubiquitin-conjugating enzyme]-L-cysteine + [acceptor protein]-L-lysine = [E2 ubiquitin-conjugating enzyme]-L-cysteine + N(6)-ubiquitinyl-[acceptor protein]-L-lysine.. It participates in protein modification; protein ubiquitination. Its function is as follows. Possesses E3 ubiquitin-protein ligase activity in vitro. Mediates mainly 'Lys-48'-linked polyubiquitination. Promotes abscisic acid (ABA)-induced stomatal closure, reactive oxygen species (ROS) production and drought tolerance. Involved in the regulation of stomatal aperture. The chain is E3 ubiquitin-protein ligase RZFP34 from Arabidopsis thaliana (Mouse-ear cress).